The chain runs to 221 residues: 7-carboxy-7-deazaguanine synthase (221 aa).

Substrate is bound by residues 12–14 and R27; that span reads ING. The Radical SAM core domain occupies 18–216; sequence KSGQLSVFIR…IQIHKIIWNP (199 aa). [4Fe-4S] cluster contacts are provided by C31, C35, and C38. T40 lines the Mg(2+) pocket. T73 serves as a coordination point for substrate. G75 lines the S-adenosyl-L-methionine pocket.

Belongs to the radical SAM superfamily. 7-carboxy-7-deazaguanine synthase family. Homodimer. Requires [4Fe-4S] cluster as cofactor. The cofactor is S-adenosyl-L-methionine. It depends on Mg(2+) as a cofactor.

The catalysed reaction is 6-carboxy-5,6,7,8-tetrahydropterin + H(+) = 7-carboxy-7-deazaguanine + NH4(+). It functions in the pathway purine metabolism; 7-cyano-7-deazaguanine biosynthesis. Functionally, catalyzes the complex heterocyclic radical-mediated conversion of 6-carboxy-5,6,7,8-tetrahydropterin (CPH4) to 7-carboxy-7-deazaguanine (CDG), a step common to the biosynthetic pathways of all 7-deazapurine-containing compounds. This chain is 7-carboxy-7-deazaguanine synthase, found in Clostridium acetobutylicum (strain ATCC 824 / DSM 792 / JCM 1419 / IAM 19013 / LMG 5710 / NBRC 13948 / NRRL B-527 / VKM B-1787 / 2291 / W).